Reading from the N-terminus, the 473-residue chain is Iron transporter SMF3 (473 aa).

Helical transmembrane passes span 14–34 (FIGP…YATS) and 44–64 (TLLF…CLCV). A glycan (N-linked (GlcNAc...) asparagine) is linked at Asn87. A run of 9 helical transmembrane segments spans residues 97–117 (AIIA…QILF), 119–139 (IPLT…LMFY), 152–172 (FEFG…LELF), 198–218 (ALYI…LYLG), 257–277 (LIIS…IVAG), 297–317 (LLVH…MLCS), 352–372 (LIAI…GISD), 373–393 (ILNF…APLI), and 448–468 (VFVW…YLLG).

It belongs to the NRAMP family.

It localises to the vacuole membrane. The protein localises to the endoplasmic reticulum membrane. Functionally, has a role in controlling the cellular iron ion levels. Mobilizes vacuolar stores of iron in conditions of low iron levels. This Saccharomyces cerevisiae (strain ATCC 204508 / S288c) (Baker's yeast) protein is Iron transporter SMF3 (SMF3).